Reading from the N-terminus, the 593-residue chain is Aspartate--tRNA ligase (593 aa).

Glu173 serves as a coordination point for L-aspartate. An aspartate region spans residues Gln197–Lys200. Arg219 is an L-aspartate binding site. ATP-binding positions include Arg219–Glu221 and Gln228. Position 449 (His449) interacts with L-aspartate. Position 483 (Glu483) interacts with ATP. Arg490 contacts L-aspartate. Gly535–Arg538 lines the ATP pocket.

This sequence belongs to the class-II aminoacyl-tRNA synthetase family. Type 1 subfamily. As to quaternary structure, homodimer.

It localises to the cytoplasm. It catalyses the reaction tRNA(Asp) + L-aspartate + ATP = L-aspartyl-tRNA(Asp) + AMP + diphosphate. Functionally, catalyzes the attachment of L-aspartate to tRNA(Asp) in a two-step reaction: L-aspartate is first activated by ATP to form Asp-AMP and then transferred to the acceptor end of tRNA(Asp). This is Aspartate--tRNA ligase from Shewanella piezotolerans (strain WP3 / JCM 13877).